The chain runs to 589 residues: Acyl-CoA ligase SID4 (589 aa).

The PTS2-type peroxisomal targeting signal motif lies at 12 to 20; it reads RLQQTLNHI. ATP-binding positions include 228–236, 367–372, D458, and R473; these read TSGSTGNPK and SSYGLT. T372 lines the substrate pocket. Residues 481 to 483, K547, and 555 to 557 each bind CoA; these read GGE and FGL. Residue K572 coordinates ATP.

This sequence belongs to the ATP-dependent AMP-binding enzyme family.

The protein resides in the peroxisome. Its pathway is siderophore biosynthesis. Functionally, acyl-CoA ligase; part of the gene cluster that mediates the biosynthesis of hydroxamate-containing siderophores that play a critical role in virulence via intracellular iron acquisition during macrophage infection. This is Acyl-CoA ligase SID4 from Ajellomyces capsulatus (Darling's disease fungus).